Reading from the N-terminus, the 88-residue chain is Apolipoprotein C-I (88 aa).

An N-terminal signal peptide occupies residues 1–26; sequence MRLLLSLPVLLVALSVVLERPAPAQA.

It belongs to the apolipoprotein C1 family.

It localises to the secreted. Functionally, inhibitor of lipoprotein binding to the low density lipoprotein (LDL) receptor, LDL receptor-related protein, and very low density lipoprotein (VLDL) receptor. Associates with high density lipoproteins (HDL) and the triacylglycerol-rich lipoproteins in the plasma and makes up about 10% of the protein of the VLDL and 2% of that of HDL. Appears to interfere directly with fatty acid uptake and is also the major plasma inhibitor of cholesteryl ester transfer protein (CETP). Binds free fatty acids and reduces their intracellular esterification. Modulates the interaction of APOE with beta-migrating VLDL and inhibits binding of beta-VLDL to the LDL receptor-related protein. The polypeptide is Apolipoprotein C-I (APOC1) (Tupaia glis (Common tree shrew)).